We begin with the raw amino-acid sequence, 147 residues long: MVHFTAEEKAAITSLWGQVNVEETGGEALGRLLVVYPWTQRFFDTFGNLSSASAIMGNPRVKAHGKKVLTSFGDAVKNLDNLKGTFAKLSELHCDKLHVDPENFRLLGNVLVIVLANHFGKEFTPQVQAAWQKMVTGVANALAYKYH.

The Globin domain maps to 3–147 (HFTAEEKAAI…VANALAYKYH (145 aa)). Heme b is bound by residues His64 and His93.

It belongs to the globin family. As to quaternary structure, heterotetramer of two alpha chains and two gamma chains in fetal hemoglobin (Hb F). In terms of tissue distribution, red blood cells.

Its function is as follows. Gamma chains make up the fetal hemoglobin F, in combination with alpha chains. This Elephas maximus (Indian elephant) protein is Hemoglobin subunit gamma (HBG).